An 80-amino-acid chain; its full sequence is DNA-binding protein HU-like (80 aa).

This sequence belongs to the bacterial histone-like protein family.

Functionally, histone-like DNA-binding protein which is capable of wrapping DNA to stabilize it, and thus to prevent its denaturation under extreme environmental conditions. This chain is DNA-binding protein HU-like, found in Rickettsia rickettsii (strain Sheila Smith).